The primary structure comprises 977 residues: Leucine--tRNA ligase (977 aa).

The 'HIGH' region signature appears at 11 to 21 (PYVNGYLHLGH). Residues 220–318 (VFYVYELYSL…EYYNTKVETQ (99 aa)) form an insert region. The 'KMSKS' region signature appears at 699–703 (KMSKS). K702 is an ATP binding site.

Belongs to the class-I aminoacyl-tRNA synthetase family.

It localises to the cytoplasm. It catalyses the reaction tRNA(Leu) + L-leucine + ATP = L-leucyl-tRNA(Leu) + AMP + diphosphate. This is Leucine--tRNA ligase (leuS) from Nanoarchaeum equitans (strain Kin4-M).